Consider the following 255-residue polypeptide: Placenta-expressed transcript 1 protein (255 aa).

The N-terminal stretch at 1-26 is a signal peptide; the sequence is MPALRTLLPHLGLFLCLALCFSPSFS. Residues asparagine 57, asparagine 67, and asparagine 126 are each glycosylated (N-linked (GlcNAc...) asparagine). Serine 236 carries the GPI-anchor amidated serine lipid modification. Positions 237-255 are cleaved as a propeptide — removed in mature form; the sequence is PLAGALHILLVFLISKLLF.

In terms of processing, N-glycosylated. Post-translationally, GPI-anchored.

The protein localises to the apical cell membrane. In terms of biological role, modulates leading keratinocyte migration and cellular adhesion to matrix proteins during a wound-healing response and promotes wound repair. May play a role during trichilemmal differentiation of the hair follicle. This Rattus norvegicus (Rat) protein is Placenta-expressed transcript 1 protein (Plet1).